Consider the following 151-residue polypeptide: 3-dehydroquinate dehydratase 1 (151 aa).

The active-site Proton acceptor is Tyr23. Asn75, His81, and Asp88 together coordinate substrate. Residue His101 is the Proton donor of the active site. Substrate is bound by residues 102–103 and Arg112; that span reads LS.

This sequence belongs to the type-II 3-dehydroquinase family. As to quaternary structure, homododecamer.

The enzyme catalyses 3-dehydroquinate = 3-dehydroshikimate + H2O. Its pathway is metabolic intermediate biosynthesis; chorismate biosynthesis; chorismate from D-erythrose 4-phosphate and phosphoenolpyruvate: step 3/7. Functionally, catalyzes a trans-dehydration via an enolate intermediate. The chain is 3-dehydroquinate dehydratase 1 (aroQ1) from Pseudomonas putida (strain ATCC 47054 / DSM 6125 / CFBP 8728 / NCIMB 11950 / KT2440).